A 185-amino-acid polypeptide reads, in one-letter code: Elongation factor P (185 aa).

Belongs to the elongation factor P family.

It is found in the cytoplasm. It functions in the pathway protein biosynthesis; polypeptide chain elongation. Involved in peptide bond synthesis. Stimulates efficient translation and peptide-bond synthesis on native or reconstituted 70S ribosomes in vitro. Probably functions indirectly by altering the affinity of the ribosome for aminoacyl-tRNA, thus increasing their reactivity as acceptors for peptidyl transferase. The protein is Elongation factor P of Mesomycoplasma hyopneumoniae (strain 232) (Mycoplasma hyopneumoniae).